Here is a 164-residue protein sequence, read N- to C-terminus: uncharacterized protein (164 aa).

An N-terminal signal peptide occupies residues M1–A18. N88 carries an N-linked (GlcNAc...) asparagine; by host glycan.

Belongs to the IIV-6 357R family.

This is an uncharacterized protein from Acheta domesticus (House cricket).